Consider the following 214-residue polypeptide: Holliday junction branch migration complex subunit RuvA (214 aa).

Positions 1 to 63 are domain I; the sequence is MISFLRGTVA…EDSLTLFGFS (63 aa). Positions 64 to 142 are domain II; it reads SDDEREVFDV…PHGTGAAAAP (79 aa). Positions 143 to 153 are flexible linker; that stretch reads AAAASAPWKPQ. A domain III region spans residues 153–214; sequence QVVAAMTSLG…RAGNRVGSRG (62 aa).

It belongs to the RuvA family. Homotetramer. Forms an RuvA(8)-RuvB(12)-Holliday junction (HJ) complex. HJ DNA is sandwiched between 2 RuvA tetramers; dsDNA enters through RuvA and exits via RuvB. An RuvB hexamer assembles on each DNA strand where it exits the tetramer. Each RuvB hexamer is contacted by two RuvA subunits (via domain III) on 2 adjacent RuvB subunits; this complex drives branch migration. In the full resolvosome a probable DNA-RuvA(4)-RuvB(12)-RuvC(2) complex forms which resolves the HJ.

It localises to the cytoplasm. Functionally, the RuvA-RuvB-RuvC complex processes Holliday junction (HJ) DNA during genetic recombination and DNA repair, while the RuvA-RuvB complex plays an important role in the rescue of blocked DNA replication forks via replication fork reversal (RFR). RuvA specifically binds to HJ cruciform DNA, conferring on it an open structure. The RuvB hexamer acts as an ATP-dependent pump, pulling dsDNA into and through the RuvAB complex. HJ branch migration allows RuvC to scan DNA until it finds its consensus sequence, where it cleaves and resolves the cruciform DNA. This chain is Holliday junction branch migration complex subunit RuvA, found in Arthrobacter sp. (strain FB24).